Here is a 217-residue protein sequence, read N- to C-terminus: Probable transaldolase (217 aa).

K83 functions as the Schiff-base intermediate with substrate in the catalytic mechanism.

Belongs to the transaldolase family. Type 3B subfamily.

The protein localises to the cytoplasm. It catalyses the reaction D-sedoheptulose 7-phosphate + D-glyceraldehyde 3-phosphate = D-erythrose 4-phosphate + beta-D-fructose 6-phosphate. It functions in the pathway carbohydrate degradation; pentose phosphate pathway; D-glyceraldehyde 3-phosphate and beta-D-fructose 6-phosphate from D-ribose 5-phosphate and D-xylulose 5-phosphate (non-oxidative stage): step 2/3. Transaldolase is important for the balance of metabolites in the pentose-phosphate pathway. This chain is Probable transaldolase, found in Maricaulis maris (strain MCS10) (Caulobacter maris).